Consider the following 408-residue polypeptide: Argininosuccinate synthase (408 aa).

Residues 14-22 and A41 each bind ATP; that span reads AYSGGLDTS. Y92 and S97 together coordinate L-citrulline. Position 122 (G122) interacts with ATP. The L-aspartate site is built by T124, N128, and D129. Residue N128 participates in L-citrulline binding. 5 residues coordinate L-citrulline: R132, S181, S190, E266, and Y278.

This sequence belongs to the argininosuccinate synthase family. Type 1 subfamily. As to quaternary structure, homotetramer.

Its subcellular location is the cytoplasm. The enzyme catalyses L-citrulline + L-aspartate + ATP = 2-(N(omega)-L-arginino)succinate + AMP + diphosphate + H(+). Its pathway is amino-acid biosynthesis; L-arginine biosynthesis; L-arginine from L-ornithine and carbamoyl phosphate: step 2/3. The protein is Argininosuccinate synthase of Pelobacter propionicus (strain DSM 2379 / NBRC 103807 / OttBd1).